A 392-amino-acid chain; its full sequence is Queuine tRNA-ribosyltransferase (392 aa).

The Proton acceptor role is filled by Asp92. Substrate is bound by residues 92 to 96 (DSGGF), Asp146, Gln188, and Gly215. An RNA binding region spans residues 246-252 (GVGSPED). Asp265 serves as the catalytic Nucleophile. An RNA binding; important for wobble base 34 recognition region spans residues 270-274 (TRLGR). Cys303, Cys305, Cys308, and His334 together coordinate Zn(2+).

Belongs to the queuine tRNA-ribosyltransferase family. Homodimer. Within each dimer, one monomer is responsible for RNA recognition and catalysis, while the other monomer binds to the replacement base PreQ1. It depends on Zn(2+) as a cofactor.

The enzyme catalyses 7-aminomethyl-7-carbaguanine + guanosine(34) in tRNA = 7-aminomethyl-7-carbaguanosine(34) in tRNA + guanine. It participates in tRNA modification; tRNA-queuosine biosynthesis. In terms of biological role, catalyzes the base-exchange of a guanine (G) residue with the queuine precursor 7-aminomethyl-7-deazaguanine (PreQ1) at position 34 (anticodon wobble position) in tRNAs with GU(N) anticodons (tRNA-Asp, -Asn, -His and -Tyr). Catalysis occurs through a double-displacement mechanism. The nucleophile active site attacks the C1' of nucleotide 34 to detach the guanine base from the RNA, forming a covalent enzyme-RNA intermediate. The proton acceptor active site deprotonates the incoming PreQ1, allowing a nucleophilic attack on the C1' of the ribose to form the product. After dissociation, two additional enzymatic reactions on the tRNA convert PreQ1 to queuine (Q), resulting in the hypermodified nucleoside queuosine (7-(((4,5-cis-dihydroxy-2-cyclopenten-1-yl)amino)methyl)-7-deazaguanosine). This is Queuine tRNA-ribosyltransferase from Herpetosiphon aurantiacus (strain ATCC 23779 / DSM 785 / 114-95).